Consider the following 515-residue polypeptide: mRNA export factor ICP27 homolog (515 aa).

Zn(2+) contacts are provided by Cys-230, His-335, Cys-337, and Cys-342. A CHC2-type zinc finger spans residues 230 to 342 (CVFNDNGHGD…SNHKCDDVSC (113 aa)). The segment covering 398-408 (YSTNHDLPQTS) has biased composition (polar residues). A disordered region spans residues 398–422 (YSTNHDLPQTSHRSHKNHGTPKVKS). Basic residues predominate over residues 409 to 422 (HRSHKNHGTPKVKS).

This sequence belongs to the HHV-1 ICP27 protein family.

The protein localises to the virion tegument. The protein resides in the virion. It localises to the host nucleus. Its subcellular location is the host cytoplasm. Its function is as follows. Immediate early (EI) protein that plays many roles during productive infection including regulation of viral gene expression and nuclear export of intronless viral RNAs. The sequence is that of mRNA export factor ICP27 homolog from Human herpesvirus 6A (strain Uganda-1102) (HHV-6 variant A).